A 1162-amino-acid chain; its full sequence is DNA-directed RNA polymerase subunit beta 1 (1162 aa).

The protein belongs to the RNA polymerase beta chain family. In terms of assembly, the RNAP catalytic core consists of 2 alpha, 1 beta, 1 beta' and 1 omega subunit. When a sigma factor is associated with the core the holoenzyme is formed, which can initiate transcription.

The catalysed reaction is RNA(n) + a ribonucleoside 5'-triphosphate = RNA(n+1) + diphosphate. Its function is as follows. DNA-dependent RNA polymerase catalyzes the transcription of DNA into RNA using the four ribonucleoside triphosphates as substrates. In Nocardia farcinica (strain IFM 10152), this protein is DNA-directed RNA polymerase subunit beta 1.